We begin with the raw amino-acid sequence, 237 residues long: Dihydroceramide fatty acyl 2-hydroxylase FAH1 (237 aa).

A run of 2 helical transmembrane segments spans residues 50-70 (LTLTVWWAVPVIWLPVVVWCI) and 80-100 (LPEIVPIVVMGIFIWTFFEYV). Zn(2+) contacts are provided by histidine 102, histidine 107, histidine 123, histidine 126, and histidine 127. The next 2 membrane-spanning stretches (helical) occupy residues 137–157 (VFPPTATAILCFPFWNIAKAI) and 164–184 (PALFGGGMLGYVMYDVTHYYL). Positions 181, 185, 201, 204, and 205 each coordinate Zn(2+).

The protein belongs to the sterol desaturase family. Interacts with CYTB5-A, CYTB5-B, CYTB5-C and CYTB5-D. Interacts indirectly with BI-1 via CYTB5-D. Requires Zn(2+) as cofactor. As to expression, expressed in leaves, roots, flowers and seeds.

It is found in the endoplasmic reticulum membrane. It carries out the reaction an N-(1,2-saturated acyl)sphinganine + 2 Fe(II)-[cytochrome b5] + O2 + 2 H(+) = an N-[(2'R)-hydroxyacyl]sphinganine + 2 Fe(III)-[cytochrome b5] + H2O. Fatty acid 2-hydroxylase involved in the alpha-hydroxylation of sphingolipid-associated very long-chain fatty acids (VLCFA). Probably involved in the resistance response to oxidative stress. This is Dihydroceramide fatty acyl 2-hydroxylase FAH1 from Arabidopsis thaliana (Mouse-ear cress).